The sequence spans 336 residues: Biotin synthase (336 aa).

Residues 54-281 (NAIQLSTLLS…KAMVRLSAGR (228 aa)) form the Radical SAM core domain. [4Fe-4S] cluster contacts are provided by C69, C73, and C76. C113, C144, C204, and R276 together coordinate [2Fe-2S] cluster.

It belongs to the radical SAM superfamily. Biotin synthase family. Homodimer. [4Fe-4S] cluster is required as a cofactor. [2Fe-2S] cluster serves as cofactor.

It carries out the reaction (4R,5S)-dethiobiotin + (sulfur carrier)-SH + 2 reduced [2Fe-2S]-[ferredoxin] + 2 S-adenosyl-L-methionine = (sulfur carrier)-H + biotin + 2 5'-deoxyadenosine + 2 L-methionine + 2 oxidized [2Fe-2S]-[ferredoxin]. Its pathway is cofactor biosynthesis; biotin biosynthesis; biotin from 7,8-diaminononanoate: step 2/2. Functionally, catalyzes the conversion of dethiobiotin (DTB) to biotin by the insertion of a sulfur atom into dethiobiotin via a radical-based mechanism. The polypeptide is Biotin synthase (Burkholderia pseudomallei (strain 1106a)).